A 609-amino-acid polypeptide reads, in one-letter code: UvrABC system protein C (609 aa).

Residues 13 to 91 (HQPGVYRMFD…IKAFQPRYNV (79 aa)) enclose the GIY-YIG domain. One can recognise a UVR domain in the interval 201 to 236 (QQVLEHLIKKMEQASMQLNFEQAAYFRDQIQAIRAV).

It belongs to the UvrC family. As to quaternary structure, interacts with UvrB in an incision complex.

The protein localises to the cytoplasm. In terms of biological role, the UvrABC repair system catalyzes the recognition and processing of DNA lesions. UvrC both incises the 5' and 3' sides of the lesion. The N-terminal half is responsible for the 3' incision and the C-terminal half is responsible for the 5' incision. The polypeptide is UvrABC system protein C (Histophilus somni (strain 129Pt) (Haemophilus somnus)).